A 276-amino-acid polypeptide reads, in one-letter code: Secreted RxLR effector protein 120 (276 aa).

An N-terminal signal peptide occupies residues 1 to 21 (MRGAYYVITALLVVASSQTSA). Residues 48-65 (QSLRGSRDVPDDLAHEER) carry the RxLR-dEER motif. Residues 97–130 (GKRPRVAEKDALEKASGADEASKKPRNTATDDAF) are disordered. The span at 101-119 (RVAEKDALEKASGADEASK) shows a compositional bias: basic and acidic residues.

Belongs to the RxLR effector family.

Its subcellular location is the secreted. The protein resides in the host nucleus. In terms of biological role, secreted effector that completely suppresses the host cell death induced by cell death-inducing proteins. The polypeptide is Secreted RxLR effector protein 120 (Plasmopara viticola (Downy mildew of grapevine)).